The following is a 412-amino-acid chain: Light-independent protochlorophyllide reductase subunit N (412 aa).

[4Fe-4S] cluster contacts are provided by cysteine 16, cysteine 41, and cysteine 102.

Belongs to the BchN/ChlN family. Protochlorophyllide reductase is composed of three subunits; ChlL, ChlN and ChlB. Forms a heterotetramer of two ChlB and two ChlN subunits. Requires [4Fe-4S] cluster as cofactor.

The enzyme catalyses chlorophyllide a + oxidized 2[4Fe-4S]-[ferredoxin] + 2 ADP + 2 phosphate = protochlorophyllide a + reduced 2[4Fe-4S]-[ferredoxin] + 2 ATP + 2 H2O. It functions in the pathway porphyrin-containing compound metabolism; chlorophyll biosynthesis (light-independent). Its function is as follows. Component of the dark-operative protochlorophyllide reductase (DPOR) that uses Mg-ATP and reduced ferredoxin to reduce ring D of protochlorophyllide (Pchlide) to form chlorophyllide a (Chlide). This reaction is light-independent. The NB-protein (ChlN-ChlB) is the catalytic component of the complex. In Synechococcus sp. (strain RCC307), this protein is Light-independent protochlorophyllide reductase subunit N.